We begin with the raw amino-acid sequence, 172 residues long: PRELI domain containing protein 3A (172 aa).

A PRELI/MSF1 domain is found at 1-172 (MKIWSSEHVF…IIEHSESAVS (172 aa)).

Belongs to the slowmo family. In terms of assembly, interacts with TRIAP1.

The protein resides in the mitochondrion. In vitro, the TRIAP1:PRELID3A complex mediates the transfer of phosphatidic acid (PA) between liposomes and probably functions as a PA transporter across the mitochondrion intermembrane space. Phosphatidic acid import is required for cardiolipin (CL) synthesis in the mitochondrial inner membrane. The protein is PRELI domain containing protein 3A (PRELID3A) of Homo sapiens (Human).